The following is a 76-amino-acid chain: Omega/kappa-hexatoxin-Ar1g (76 aa).

The first 22 residues, 1-22, serve as a signal peptide directing secretion; that stretch reads MNTATGFIVLLVLATVLGGIEA. Positions 23–35 are excised as a propeptide; it reads GESHMRKDAMGRV. Intrachain disulfides connect C40–C55, C47–C60, and C54–C74.

Belongs to the neurotoxin 08 (Shiva) family. 02 (omega/kappa toxin) subfamily. Expressed by the venom gland.

The protein resides in the secreted. Toxin that may inhibit ion channels. The polypeptide is Omega/kappa-hexatoxin-Ar1g (Atrax robustus (Sydney funnel-web spider)).